Reading from the N-terminus, the 165-residue chain is Phosphopantetheine adenylyltransferase (165 aa).

Serine 10 serves as a coordination point for substrate. Residues 10 to 11 (SF) and histidine 18 each bind ATP. Residues lysine 42, threonine 79, and arginine 93 each contribute to the substrate site. ATP is bound by residues 94 to 96 (GLR), glutamate 104, and 129 to 135 (VRPITAT).

This sequence belongs to the bacterial CoaD family. In terms of assembly, homohexamer. Requires Mg(2+) as cofactor.

The protein localises to the cytoplasm. The enzyme catalyses (R)-4'-phosphopantetheine + ATP + H(+) = 3'-dephospho-CoA + diphosphate. The protein operates within cofactor biosynthesis; coenzyme A biosynthesis; CoA from (R)-pantothenate: step 4/5. Functionally, reversibly transfers an adenylyl group from ATP to 4'-phosphopantetheine, yielding dephospho-CoA (dPCoA) and pyrophosphate. The protein is Phosphopantetheine adenylyltransferase of Nitrobacter hamburgensis (strain DSM 10229 / NCIMB 13809 / X14).